The chain runs to 271 residues: Shikimate dehydrogenase (NADP(+)) (271 aa).

Shikimate is bound by residues 15 to 17 (SKS) and Thr-62. Lys-66 (proton acceptor) is an active-site residue. Glu-78 is a binding site for NADP(+). Residues Asn-87 and Asp-103 each coordinate shikimate. Residues 127 to 131 (GAGGA), 151 to 156 (NRTQAK), and Met-214 contribute to the NADP(+) site. Position 216 (Tyr-216) interacts with shikimate. Gly-238 contacts NADP(+).

The protein belongs to the shikimate dehydrogenase family. Homodimer.

It carries out the reaction shikimate + NADP(+) = 3-dehydroshikimate + NADPH + H(+). It functions in the pathway metabolic intermediate biosynthesis; chorismate biosynthesis; chorismate from D-erythrose 4-phosphate and phosphoenolpyruvate: step 4/7. Involved in the biosynthesis of the chorismate, which leads to the biosynthesis of aromatic amino acids. Catalyzes the reversible NADPH linked reduction of 3-dehydroshikimate (DHSA) to yield shikimate (SA). The polypeptide is Shikimate dehydrogenase (NADP(+)) (Shewanella pealeana (strain ATCC 700345 / ANG-SQ1)).